Reading from the N-terminus, the 191-residue chain is Iron-sulfur flavoprotein (191 aa).

[4Fe-4S] cluster-binding residues include C47, C50, C53, and C59.

Belongs to the SsuE family. Isf subfamily. In terms of assembly, homodimer. FMN serves as cofactor. [4Fe-4S] cluster is required as a cofactor.

In terms of biological role, redox-active protein probably involved in electron transport during fermentation of acetate to methane. This Methanosarcina thermophila protein is Iron-sulfur flavoprotein (isf).